The chain runs to 383 residues: 8-amino-7-oxononanoate synthase (383 aa).

Residue arginine 22 coordinates substrate. Position 109–110 (109–110) interacts with pyridoxal 5'-phosphate; sequence GF. Histidine 134 is a binding site for substrate. Residues serine 178, histidine 206, and threonine 232 each contribute to the pyridoxal 5'-phosphate site. N6-(pyridoxal phosphate)lysine is present on lysine 235. Position 348 (threonine 348) interacts with substrate.

This sequence belongs to the class-II pyridoxal-phosphate-dependent aminotransferase family. BioF subfamily. As to quaternary structure, homodimer. It depends on pyridoxal 5'-phosphate as a cofactor.

The catalysed reaction is 6-carboxyhexanoyl-[ACP] + L-alanine + H(+) = (8S)-8-amino-7-oxononanoate + holo-[ACP] + CO2. It participates in cofactor biosynthesis; biotin biosynthesis. In terms of biological role, catalyzes the decarboxylative condensation of pimeloyl-[acyl-carrier protein] and L-alanine to produce 8-amino-7-oxononanoate (AON), [acyl-carrier protein], and carbon dioxide. The polypeptide is 8-amino-7-oxononanoate synthase (Vibrio parahaemolyticus serotype O3:K6 (strain RIMD 2210633)).